A 96-amino-acid polypeptide reads, in one-letter code: Putative septation protein SpoVG (96 aa).

Belongs to the SpoVG family.

Functionally, could be involved in septation. The protein is Putative septation protein SpoVG of Geobacillus sp. (strain WCH70).